The primary structure comprises 136 residues: Small ribosomal subunit protein uS8c (136 aa).

Belongs to the universal ribosomal protein uS8 family. As to quaternary structure, part of the 30S ribosomal subunit.

Its subcellular location is the plastid. The protein localises to the chloroplast. Its function is as follows. One of the primary rRNA binding proteins, it binds directly to 16S rRNA central domain where it helps coordinate assembly of the platform of the 30S subunit. The sequence is that of Small ribosomal subunit protein uS8c (rps8) from Citrus sinensis (Sweet orange).